A 242-amino-acid chain; its full sequence is Ras-like protein family member 11A (242 aa).

The segment at 17-241 (ESSSDYLLPK…SSKAKASSAL (225 aa)) is small GTPase-like. GTP is bound by residues 34 to 41 (GAGCVGKS), 81 to 88 (DTPGGIQA), and 147 to 150 (NKGD).

Belongs to the small GTPase superfamily. Ras family. As to quaternary structure, interacts with UBF/UBTF.

Its subcellular location is the nucleus. The protein localises to the nucleolus. It catalyses the reaction GTP + H2O = GDP + phosphate + H(+). Regulator of rDNA transcription. Acts in cooperation UBF/UBTF and positively regulates RNA polymerase I transcription. The protein is Ras-like protein family member 11A of Mus musculus (Mouse).